We begin with the raw amino-acid sequence, 162 residues long: MLNIVLFEPEIPPNTGNIIRLCANTGCQLHLIKPLGFTWDDKRLRRAGLDYHEFADIKHHHDYQAFLDSEKLDSTQPARLFALTTKGTPAHSAVSYQANDYLLFGPETRGLPAYILDALPAQQKIRIPMQADSRSMNLSNAVSVVVYEAWRQLGYPGALLKE.

S-adenosyl-L-methionine contacts are provided by Leu83, Gly105, Ile127, and Ser135.

Belongs to the class IV-like SAM-binding methyltransferase superfamily. RNA methyltransferase TrmH family. TrmL subfamily. Homodimer.

It localises to the cytoplasm. The enzyme catalyses cytidine(34) in tRNA + S-adenosyl-L-methionine = 2'-O-methylcytidine(34) in tRNA + S-adenosyl-L-homocysteine + H(+). The catalysed reaction is 5-carboxymethylaminomethyluridine(34) in tRNA(Leu) + S-adenosyl-L-methionine = 5-carboxymethylaminomethyl-2'-O-methyluridine(34) in tRNA(Leu) + S-adenosyl-L-homocysteine + H(+). Methylates the ribose at the nucleotide 34 wobble position in the two leucyl isoacceptors tRNA(Leu)(CmAA) and tRNA(Leu)(cmnm5UmAA). Catalyzes the methyl transfer from S-adenosyl-L-methionine to the 2'-OH of the wobble nucleotide. The protein is tRNA (cytidine(34)-2'-O)-methyltransferase of Yersinia pestis.